We begin with the raw amino-acid sequence, 135 residues long: 30 kDa antigenic glycoprotein (135 aa).

An N-terminal signal peptide occupies residues 1–5; it reads GNTYS. Residues asparagine 22, asparagine 31, asparagine 57, and asparagine 73 are each glycosylated (N-linked (GlcNAc...) asparagine).

The protein to H.contortus 15 kDa excretory/secretory protein.

The protein resides in the secreted. This chain is 30 kDa antigenic glycoprotein, found in Trichostrongylus colubriformis (Black scour worm).